A 245-amino-acid chain; its full sequence is Cysteine-rich secretory protein 3 (245 aa).

A signal peptide spans 1–22 (MALLPVLLFLAAVLLPFFPASG). The SCP domain maps to 42–171 (VNKHNDLRRT…TLKYYYVCQY (130 aa)). Intrachain disulfides connect cysteine 191-cysteine 198, cysteine 194-cysteine 203, cysteine 207-cysteine 240, cysteine 216-cysteine 234, and cysteine 225-cysteine 238. The ShKT domain occupies 207-240 (CEYEDLVSNCDSLKKIAGCEHELLKENCKTTCQC).

Belongs to the CRISP family. In terms of assembly, interacts with A1BG. In terms of tissue distribution, expressed in the salivary gland, in the ampulla and the seminal vesicle.

It localises to the secreted. The chain is Cysteine-rich secretory protein 3 (CRISP3) from Equus caballus (Horse).